We begin with the raw amino-acid sequence, 317 residues long: Sulfate adenylyltransferase subunit 2 (317 aa).

Disordered stretches follow at residues 1 to 21 (MPDS…APLD) and 298 to 317 (RAID…EGYF).

This sequence belongs to the PAPS reductase family. CysD subfamily. Heterodimer composed of CysD, the smaller subunit, and CysN.

It carries out the reaction sulfate + ATP + H(+) = adenosine 5'-phosphosulfate + diphosphate. It participates in sulfur metabolism; hydrogen sulfide biosynthesis; sulfite from sulfate: step 1/3. Functionally, with CysN forms the ATP sulfurylase (ATPS) that catalyzes the adenylation of sulfate producing adenosine 5'-phosphosulfate (APS) and diphosphate, the first enzymatic step in sulfur assimilation pathway. APS synthesis involves the formation of a high-energy phosphoric-sulfuric acid anhydride bond driven by GTP hydrolysis by CysN coupled to ATP hydrolysis by CysD. This chain is Sulfate adenylyltransferase subunit 2, found in Rhizobium johnstonii (strain DSM 114642 / LMG 32736 / 3841) (Rhizobium leguminosarum bv. viciae).